Consider the following 227-residue polypeptide: Uracil-DNA glycosylase (227 aa).

Asp65 acts as the Proton acceptor in catalysis.

Belongs to the uracil-DNA glycosylase (UDG) superfamily. UNG family.

Its subcellular location is the cytoplasm. The enzyme catalyses Hydrolyzes single-stranded DNA or mismatched double-stranded DNA and polynucleotides, releasing free uracil.. Functionally, excises uracil residues from the DNA which can arise as a result of misincorporation of dUMP residues by DNA polymerase or due to deamination of cytosine. This chain is Uracil-DNA glycosylase, found in Buchnera aphidicola subsp. Cinara cedri (strain Cc).